The following is a 493-amino-acid chain: Probable cytochrome P450 6a13 (493 aa).

Cysteine 435 is a heme binding site.

It belongs to the cytochrome P450 family. Heme is required as a cofactor.

Its subcellular location is the endoplasmic reticulum membrane. The protein resides in the microsome membrane. May be involved in the metabolism of insect hormones and in the breakdown of synthetic insecticides. This Drosophila melanogaster (Fruit fly) protein is Probable cytochrome P450 6a13 (Cyp6a13).